Reading from the N-terminus, the 258-residue chain is Meiotic drive suppressor wtf20 (258 aa).

The disordered stretch occupies residues methionine 1–valine 71. The segment covering lysine 19–leucine 30 has biased composition (basic and acidic residues). Transmembrane regions (helical) follow at residues isoleucine 84 to valine 106, phenylalanine 121 to tyrosine 140, and serine 196 to valine 216.

It belongs to the WTF family. As to quaternary structure, homomer. Interacts with other proteins that exhibit high sequence similarity.

It is found in the spore membrane. The protein resides in the vacuole membrane. Its function is as follows. Acts as a suppressor component of the dual wtf meiotic drive system, and can suppress but not confer meiotic drive by compatible poisons. Wtf meiotic drive systems promote unequal transmission of alleles from the parental zygote to progeny spores by encoding a poison and an antidote from the same locus; the poison is trans-acting and forms toxic aggregates in all spores within an ascus, wherease the antidote is spore-specific and targets aggregates for degradation by the vacuole. Meiotic drive by wtf systems therefore lead to poisoning of all progeny that do not inherit the dual poison/antidote allele, or express a compatible antidote. This chain is Meiotic drive suppressor wtf20, found in Schizosaccharomyces pombe (strain 972 / ATCC 24843) (Fission yeast).